The following is a 269-amino-acid chain: Shikimate dehydrogenase (NADP(+)) (269 aa).

Shikimate is bound by residues 17-19 (SKS) and threonine 64. Residue lysine 68 is the Proton acceptor of the active site. Aspartate 80 is a binding site for NADP(+). 2 residues coordinate shikimate: asparagine 89 and aspartate 105. Residues 130 to 134 (GAGGA), 154 to 159 (NRTHAK), and methionine 213 each bind NADP(+). Tyrosine 215 serves as a coordination point for shikimate. Residue glycine 237 coordinates NADP(+).

The protein belongs to the shikimate dehydrogenase family. As to quaternary structure, homodimer.

It catalyses the reaction shikimate + NADP(+) = 3-dehydroshikimate + NADPH + H(+). Its pathway is metabolic intermediate biosynthesis; chorismate biosynthesis; chorismate from D-erythrose 4-phosphate and phosphoenolpyruvate: step 4/7. Its function is as follows. Involved in the biosynthesis of the chorismate, which leads to the biosynthesis of aromatic amino acids. Catalyzes the reversible NADPH linked reduction of 3-dehydroshikimate (DHSA) to yield shikimate (SA). The chain is Shikimate dehydrogenase (NADP(+)) from Neisseria polysaccharea.